The chain runs to 96 residues: UPF0251 protein VPA0321 (96 aa).

The protein belongs to the UPF0251 family.

This is UPF0251 protein VPA0321 from Vibrio parahaemolyticus serotype O3:K6 (strain RIMD 2210633).